The sequence spans 209 residues: Ribonuclease HII (209 aa).

The 190-residue stretch at 20–209 (GLVAGVDEAG…VARSLPGACR (190 aa)) folds into the RNase H type-2 domain. 3 residues coordinate a divalent metal cation: D26, E27, and D118.

This sequence belongs to the RNase HII family. Mn(2+) serves as cofactor. The cofactor is Mg(2+).

The protein localises to the cytoplasm. It carries out the reaction Endonucleolytic cleavage to 5'-phosphomonoester.. Its function is as follows. Endonuclease that specifically degrades the RNA of RNA-DNA hybrids. The polypeptide is Ribonuclease HII (Verminephrobacter eiseniae (strain EF01-2)).